Reading from the N-terminus, the 725-residue chain is Glutamine-dependent NAD(+) synthetase (725 aa).

Residues 4–274 enclose the CN hydrolase domain; the sequence is LKVATCNLNQ…VEVIISQVDL (271 aa). Residue Glu-44 is the Proton acceptor; for glutaminase activity of the active site. Catalysis depends on Lys-113, which acts as the For glutaminase activity. Residue Cys-174 is the Nucleophile; for glutaminase activity of the active site. The tract at residues 324–709 is ligase; it reads YHSPQEEIAF…FPEEEANSNK (386 aa). 354–361 is a binding site for ATP; sequence PLSGGADS. Ser-356 is an active-site residue.

In the C-terminal section; belongs to the NAD synthetase family.

The catalysed reaction is deamido-NAD(+) + L-glutamine + ATP + H2O = L-glutamate + AMP + diphosphate + NAD(+) + H(+). It functions in the pathway cofactor biosynthesis; NAD(+) biosynthesis; NAD(+) from deamido-NAD(+) (L-Gln route): step 1/1. This chain is Glutamine-dependent NAD(+) synthetase, found in Arabidopsis thaliana (Mouse-ear cress).